The primary structure comprises 175 residues: NADH-ubiquinone oxidoreductase chain 6 (175 aa).

Helical transmembrane passes span 1 to 21 (MMTYIVFILSIIFVISFVGFS), 25 to 45 (SPIYGGLVLIISGAVGCGIVL), 47 to 67 (FGGSFLGLMVFLIYLGGMLVV), 88 to 108 (AVLGAFVMGLLSELLLACYIL), and 149 to 169 (YGTWLVIVTGWSLFIGVLVIM).

It belongs to the complex I subunit 6 family. Core subunit of respiratory chain NADH dehydrogenase (Complex I) which is composed of 45 different subunits.

It localises to the mitochondrion inner membrane. It catalyses the reaction a ubiquinone + NADH + 5 H(+)(in) = a ubiquinol + NAD(+) + 4 H(+)(out). Core subunit of the mitochondrial membrane respiratory chain NADH dehydrogenase (Complex I) which catalyzes electron transfer from NADH through the respiratory chain, using ubiquinone as an electron acceptor. Essential for the catalytic activity and assembly of complex I. This chain is NADH-ubiquinone oxidoreductase chain 6 (MT-ND6), found in Halichoerus grypus (Gray seal).